The sequence spans 1636 residues: Tyrosine-protein phosphatase non-receptor type 23 (1636 aa).

Residues 8–394 enclose the BRO1 domain; sequence PMIWLDLKEA…AKIEDKNEVL (387 aa). TPR repeat units lie at residues 250-283 and 374-407; these read AVAH…LNEA and EEKA…DPET. A coiled-coil region spans residues 550 to 623; it reads KAVLQNLKRI…VYLEQNLAAQ (74 aa). Basic and acidic residues predominate over residues 701–714; it reads EAARQQLLDRELKK. Disordered regions lie at residues 701–812 and 888–1151; these read EAAR…GPHA and QAPI…AAEG. Position 733 is a phosphoserine (serine 733). The his stretch occupies residues 770–1130; sequence HFPPSPFPSS…SSSPESQHGG (361 aa). Composition is skewed to pro residues over residues 898–922 and 950–962; these read RPNP…PTPY and RIGP…PQPH. Position 950 is an omega-N-methylarginine (arginine 950). 6 repeat units span residues 953 to 954, 955 to 956, 957 to 958, 959 to 960, 961 to 962, and 963 to 964. Residues 953–964 are 6 X 2 AA approximate tandem repeats of P-Q; that stretch reads PQPQPHPQPHPS. Composition is skewed to pro residues over residues 983–1002, 1036–1050, and 1083–1109; these read LFPP…PYAP, FPSP…PPLA, and HLVP…PPPC. Positions 1120-1131 are enriched in polar residues; the sequence is LSSSPESQHGGT. Serine 1122 and serine 1123 each carry phosphoserine. Phosphothreonine is present on threonine 1131. The 261-residue stretch at 1192 to 1452 folds into the Tyrosine-protein phosphatase domain; that stretch reads DTVWRELQDA…RFCYEAVVRH (261 aa). Cysteine 1392 (phosphocysteine intermediate) is an active-site residue. The segment at 1513–1636 is disordered; the sequence is LESPVASLPG…LDPLWTLNKT (124 aa). Composition is skewed to pro residues over residues 1523–1533 and 1542–1556; these read PAEPPGLPPAS and SSSP…PEAP. Over residues 1567–1587 the composition is skewed to low complexity; that stretch reads APSSGPPSSSLELLASLTPEA. The residue at position 1615 (arginine 1615) is an Omega-N-methylarginine.

This sequence belongs to the protein-tyrosine phosphatase family. Non-receptor class subfamily. Interacts with GRAP2 and GRB2. Interacts with UBAP1. Interacts with CHMP4B.

The protein resides in the nucleus. Its subcellular location is the cytoplasm. It localises to the cytoplasmic vesicle. The protein localises to the endosome. It is found in the cytoskeleton. The protein resides in the cilium basal body. Its subcellular location is the early endosome. It carries out the reaction O-phospho-L-tyrosyl-[protein] + H2O = L-tyrosyl-[protein] + phosphate. Plays a role in sorting of endocytic ubiquitinated cargos into multivesicular bodies (MVBs) via its interaction with the ESCRT-I complex (endosomal sorting complex required for transport I), and possibly also other ESCRT complexes. May act as a negative regulator of Ras-mediated mitogenic activity. Plays a role in ciliogenesis. This is Tyrosine-protein phosphatase non-receptor type 23 (PTPN23) from Homo sapiens (Human).